The primary structure comprises 1356 residues: DNA-directed RNA polymerase subunit beta (1356 aa).

It belongs to the RNA polymerase beta chain family. The RNAP catalytic core consists of 2 alpha, 1 beta, 1 beta' and 1 omega subunit. When a sigma factor is associated with the core the holoenzyme is formed, which can initiate transcription.

It carries out the reaction RNA(n) + a ribonucleoside 5'-triphosphate = RNA(n+1) + diphosphate. DNA-dependent RNA polymerase catalyzes the transcription of DNA into RNA using the four ribonucleoside triphosphates as substrates. This is DNA-directed RNA polymerase subunit beta from Phenylobacterium zucineum (strain HLK1).